Reading from the N-terminus, the 347-residue chain is Sesquiterpene synthase M422DRAFT_47084 (347 aa).

Residues D93, N228, S232, and E236 each coordinate Mg(2+). A DDXXD motif motif is present at residues 93-97 (DEYTD). (2E,6E)-farnesyl diphosphate contacts are provided by R318 and Y319.

The protein belongs to the terpene synthase family. Mg(2+) is required as a cofactor.

It catalyses the reaction (2E,6E)-farnesyl diphosphate = viridiflorene + diphosphate. Terpene cyclase that catalyzes the cyclization of farnesyl diphosphate (FPP) to viridiflorene and viridiflorol. This Sphaerobolus stellatus (strain SS14) protein is Sesquiterpene synthase M422DRAFT_47084.